We begin with the raw amino-acid sequence, 362 residues long: Chorismate synthase (362 aa).

Position 47 (arginine 47) interacts with NADP(+). Residues 124–126 (RSS), glycine 286, 301–305 (KPTAT), and arginine 327 each bind FMN.

The protein belongs to the chorismate synthase family. Homotetramer. It depends on FMNH2 as a cofactor.

The catalysed reaction is 5-O-(1-carboxyvinyl)-3-phosphoshikimate = chorismate + phosphate. It functions in the pathway metabolic intermediate biosynthesis; chorismate biosynthesis; chorismate from D-erythrose 4-phosphate and phosphoenolpyruvate: step 7/7. Catalyzes the anti-1,4-elimination of the C-3 phosphate and the C-6 proR hydrogen from 5-enolpyruvylshikimate-3-phosphate (EPSP) to yield chorismate, which is the branch point compound that serves as the starting substrate for the three terminal pathways of aromatic amino acid biosynthesis. This reaction introduces a second double bond into the aromatic ring system. The sequence is that of Chorismate synthase from Trichormus variabilis (strain ATCC 29413 / PCC 7937) (Anabaena variabilis).